A 175-amino-acid chain; its full sequence is Inorganic pyrophosphatase (175 aa).

Residues Lys-30, Arg-44, and Tyr-56 each contribute to the substrate site. Residues Asp-66, Asp-71, and Asp-103 each contribute to the Mg(2+) site. Tyr-142 lines the substrate pocket.

Belongs to the PPase family. In terms of assembly, homohexamer. Mg(2+) serves as cofactor.

The protein resides in the cytoplasm. It carries out the reaction diphosphate + H2O = 2 phosphate + H(+). Its function is as follows. Catalyzes the hydrolysis of inorganic pyrophosphate (PPi) forming two phosphate ions. The chain is Inorganic pyrophosphatase from Yersinia pestis.